The following is an 888-amino-acid chain: Leucine--tRNA ligase (888 aa).

Positions 42 to 52 match the 'HIGH' region motif; sequence PYPSGKLHMGH. The 'KMSKS' region motif lies at 640-644; it reads TMSKS. Lysine 643 lines the ATP pocket.

The protein belongs to the class-I aminoacyl-tRNA synthetase family.

The protein localises to the cytoplasm. It carries out the reaction tRNA(Leu) + L-leucine + ATP = L-leucyl-tRNA(Leu) + AMP + diphosphate. This chain is Leucine--tRNA ligase, found in Polaromonas naphthalenivorans (strain CJ2).